The primary structure comprises 212 residues: Mediator of RNA polymerase II transcription subunit 20 (212 aa).

The protein belongs to the Mediator complex subunit 20 family. Component of the Mediator complex, which is composed of MED1, MED4, MED6, MED7, MED8, MED9, MED10, MED11, MED12, MED13, MED13L, MED14, MED15, MED16, MED17, MED18, MED19, MED20, MED21, MED22, MED23, MED24, MED25, MED26, MED27, MED29, MED30, MED31, CCNC, CDK8 and CDC2L6/CDK11. The MED12, MED13, CCNC and CDK8 subunits form a distinct module termed the CDK8 module. Mediator containing the CDK8 module is less active than Mediator lacking this module in supporting transcriptional activation. Individual preparations of the Mediator complex lacking one or more distinct subunits have been variously termed ARC, CRSP, DRIP, PC2, SMCC and TRAP. Interacts with PPARG.

It is found in the nucleus. Component of the Mediator complex, a coactivator involved in the regulated transcription of nearly all RNA polymerase II-dependent genes. Mediator functions as a bridge to convey information from gene-specific regulatory proteins to the basal RNA polymerase II transcription machinery. Mediator is recruited to promoters by direct interactions with regulatory proteins and serves as a scaffold for the assembly of a functional preinitiation complex with RNA polymerase II and the general transcription factors. The sequence is that of Mediator of RNA polymerase II transcription subunit 20 (Med20) from Rattus norvegicus (Rat).